We begin with the raw amino-acid sequence, 190 residues long: dCTP deaminase (190 aa).

Residue Lys113–Arg118 coordinates dCTP. Residue Glu139 is the Proton donor/acceptor of the active site. Positions 158, 172, 181, and 182 each coordinate dCTP.

Belongs to the dCTP deaminase family. In terms of assembly, homotrimer.

The enzyme catalyses dCTP + H2O + H(+) = dUTP + NH4(+). Its pathway is pyrimidine metabolism; dUMP biosynthesis; dUMP from dCTP (dUTP route): step 1/2. Catalyzes the deamination of dCTP to dUTP. The chain is dCTP deaminase from Chlamydia caviae (strain ATCC VR-813 / DSM 19441 / 03DC25 / GPIC) (Chlamydophila caviae).